Here is a 153-residue protein sequence, read N- to C-terminus: MSQARTLHRLIAPAVEALGFELVGCELFRRGATTILQVFVDKPGGIGLDECAKVSRQISAVLDVEDPIRGRYTLEVSSPGLERPLYTANHYRRFIGNKAKIRLREPREGQRQFRGMIVAVDNEEQVTLQLDNKILKVPLGEIEKANLIADFEG.

The protein belongs to the RimP family.

Its subcellular location is the cytoplasm. In terms of biological role, required for maturation of 30S ribosomal subunits. The sequence is that of Ribosome maturation factor RimP from Coxiella burnetii (strain CbuK_Q154) (Coxiella burnetii (strain Q154)).